Here is a 333-residue protein sequence, read N- to C-terminus: Phosphoribosylformylglycinamidine cyclo-ligase (333 aa).

It belongs to the AIR synthase family.

It is found in the cytoplasm. It carries out the reaction 2-formamido-N(1)-(5-O-phospho-beta-D-ribosyl)acetamidine + ATP = 5-amino-1-(5-phospho-beta-D-ribosyl)imidazole + ADP + phosphate + H(+). Its pathway is purine metabolism; IMP biosynthesis via de novo pathway; 5-amino-1-(5-phospho-D-ribosyl)imidazole from N(2)-formyl-N(1)-(5-phospho-D-ribosyl)glycinamide: step 2/2. The protein is Phosphoribosylformylglycinamidine cyclo-ligase of Clostridium perfringens (strain 13 / Type A).